Here is a 317-residue protein sequence, read N- to C-terminus: Melanocyte-stimulating hormone receptor (317 aa).

Residues 1 to 37 lie on the Extracellular side of the membrane; it reads MPIHGAPRKLLGSLNSTPTATPKLGLAANHTGAPCLE. Asparagine 29 is a glycosylation site (N-linked (GlcNAc...) asparagine). Residues 38-63 traverse the membrane as a helical segment; it reads VSIPDGLFLSLGLVSLVENVLVVAAI. The Cytoplasmic portion of the chain corresponds to 64–72; it reads AKNRNLHSP. A helical membrane pass occupies residues 73–93; the sequence is MYCFICCLALSDLLVSGSNML. Over 94 to 118 the chain is Extracellular; the sequence is EMAVVLLLEGGALATRASVVQQLHN. A helical membrane pass occupies residues 119–140; that stretch reads TIDVLTCSSMLCSLCFLGAIAV. Residues 141-163 are Cytoplasmic-facing; that stretch reads DRHISIFYALRYHSIMTLPRAQR. Residues 164 to 183 form a helical membrane-spanning segment; it reads VIAAIWVASILSSTLFITYY. The Extracellular segment spans residues 184-191; sequence DHAAVLLC. The helical transmembrane segment at 192–211 threads the bilayer; sequence LVVFFLAMLVLMAVLYVHML. Residues 212–240 are Cytoplasmic-facing; that stretch reads ARACQHAQGITRLHKRQPPAHQGFGLRGA. Residues 241–266 form a helical membrane-spanning segment; the sequence is ATLTILLGIFFLCWGPFFLHLKLVVF. The Extracellular segment spans residues 267–279; the sequence is CPQHLTCSCIFKN. A helical transmembrane segment spans residues 280–300; it reads FKVFLTLIICNTIIDPLIYAF. Residues 301–317 are Cytoplasmic-facing; that stretch reads RSQELRRTLKEVLLCSW. Cysteine 315 carries the S-palmitoyl cysteine lipid modification.

Belongs to the G-protein coupled receptor 1 family. Interacts with MGRN1, but does not undergo MGRN1-mediated ubiquitination; this interaction competes with GNAS-binding and thus inhibits agonist-induced cAMP production. Interacts with OPN3; the interaction results in a decrease in MC1R-mediated cAMP signaling and ultimately a decrease in melanin production in melanocytes.

The protein resides in the cell membrane. Functionally, receptor for MSH (alpha, beta and gamma) and ACTH. The activity of this receptor is mediated by G proteins which activate adenylate cyclase. Mediates melanogenesis, the production of eumelanin (black/brown) and phaeomelanin (red/yellow), via regulation of cAMP signaling in melanocytes. The protein is Melanocyte-stimulating hormone receptor (MC1R) of Saimiri oerstedii (Central American squirrel monkey).